A 309-amino-acid polypeptide reads, in one-letter code: NAD kinase (309 aa).

Aspartate 89 acts as the Proton acceptor in catalysis. Residues 89–90 (DG), 163–164 (NE), histidine 174, arginine 191, aspartate 193, and 204–209 (TAYALS) each bind NAD(+).

The protein belongs to the NAD kinase family. A divalent metal cation is required as a cofactor.

Its subcellular location is the cytoplasm. The enzyme catalyses NAD(+) + ATP = ADP + NADP(+) + H(+). Functionally, involved in the regulation of the intracellular balance of NAD and NADP, and is a key enzyme in the biosynthesis of NADP. Catalyzes specifically the phosphorylation on 2'-hydroxyl of the adenosine moiety of NAD to yield NADP. The protein is NAD kinase of Shewanella baltica (strain OS185).